Reading from the N-terminus, the 629-residue chain is Kelch-like protein 8 (629 aa).

Over residues 1 to 10 (MASESTNGKQ) the composition is skewed to polar residues. Positions 1–40 (MASESTNGKQARSHVTKGRRQYQHQHQQQQQQQQQVRSRS) are disordered. At Ala-2 the chain carries N-acetylalanine. Over residues 11–23 (ARSHVTKGRRQYQ) the composition is skewed to basic residues. The segment covering 24–35 (HQHQQQQQQQQQ) has biased composition (low complexity). In terms of domain architecture, BTB spans 76 to 143 (CDVTLKVGSK…VYSSRLTLTV (68 aa)). In terms of domain architecture, BACK spans 178–279 (CLAVRAFAES…LPVDFLMGVV (102 aa)). 6 Kelch repeats span residues 328–375 (VLFC…SVEG), 376–422 (KVYA…SLGG), 424–469 (IYAI…ALIN), 471–516 (VYAV…ELHG), 517–563 (CLYV…TVMG), and 565–610 (IFAV…VCDC).

Component of the BCR(KLHL8) E3 ubiquitin ligase complex, at least composed of CUL3, KLHL8 and RBX1. Interacts with RAPSN.

Its pathway is protein modification; protein ubiquitination. Substrate-specific adapter of a BCR (BTB-CUL3-RBX1) E3 ubiquitin ligase complex required for The BCR(KLHL8) ubiquitin ligase complex mediates ubiquitination and degradation of RAPSN. The polypeptide is Kelch-like protein 8 (Klhl8) (Mus musculus (Mouse)).